The primary structure comprises 641 residues: Probable ATP-dependent helicase YpvA (641 aa).

Residues 29 to 303 enclose the Helicase ATP-binding domain; sequence YDILPEKGFD…EFAELIEDAL (275 aa). Residue 64–71 participates in ATP binding; it reads AGVGTGKT. Residues Cys133, Cys197, Cys200, and Cys206 each coordinate [4Fe-4S] cluster. Positions 257–260 match the DEGH box motif; the sequence is DEGH.

The protein belongs to the helicase family. DinG subfamily. [4Fe-4S] cluster is required as a cofactor.

It catalyses the reaction Couples ATP hydrolysis with the unwinding of duplex DNA at the replication fork by translocating in the 5'-3' direction. This creates two antiparallel DNA single strands (ssDNA). The leading ssDNA polymer is the template for DNA polymerase III holoenzyme which synthesizes a continuous strand.. It carries out the reaction ATP + H2O = ADP + phosphate + H(+). Its function is as follows. Might be a 5'-3' DNA helicase. In Bacillus subtilis (strain 168), this protein is Probable ATP-dependent helicase YpvA (ypvA).